Consider the following 238-residue polypeptide: UDP-2,3-diacylglucosamine hydrolase (238 aa).

The Mn(2+) site is built by Asp8, His10, Asp41, Asn78, and His113. 78–79 (NR) lines the substrate pocket. Substrate contacts are provided by Asp121, Ser159, Asn163, Lys166, and His194. Residues His194 and His196 each contribute to the Mn(2+) site.

It belongs to the LpxH family. Requires Mn(2+) as cofactor.

Its subcellular location is the cell inner membrane. It catalyses the reaction UDP-2-N,3-O-bis[(3R)-3-hydroxytetradecanoyl]-alpha-D-glucosamine + H2O = 2-N,3-O-bis[(3R)-3-hydroxytetradecanoyl]-alpha-D-glucosaminyl 1-phosphate + UMP + 2 H(+). It participates in glycolipid biosynthesis; lipid IV(A) biosynthesis; lipid IV(A) from (3R)-3-hydroxytetradecanoyl-[acyl-carrier-protein] and UDP-N-acetyl-alpha-D-glucosamine: step 4/6. Hydrolyzes the pyrophosphate bond of UDP-2,3-diacylglucosamine to yield 2,3-diacylglucosamine 1-phosphate (lipid X) and UMP by catalyzing the attack of water at the alpha-P atom. Involved in the biosynthesis of lipid A, a phosphorylated glycolipid that anchors the lipopolysaccharide to the outer membrane of the cell. The protein is UDP-2,3-diacylglucosamine hydrolase of Shewanella pealeana (strain ATCC 700345 / ANG-SQ1).